The primary structure comprises 484 residues: Malonate-semialdehyde dehydrogenase 1 (484 aa).

NAD(+)-binding residues include Phe-154, Lys-178, Glu-181, Arg-182, and Ser-231. Cys-286 serves as the catalytic Nucleophile. Residue Glu-384 coordinates NAD(+).

This sequence belongs to the aldehyde dehydrogenase family. IolA subfamily. In terms of assembly, homotetramer.

It carries out the reaction 3-oxopropanoate + NAD(+) + CoA + H2O = hydrogencarbonate + acetyl-CoA + NADH + H(+). The catalysed reaction is 2-methyl-3-oxopropanoate + NAD(+) + CoA + H2O = propanoyl-CoA + hydrogencarbonate + NADH + H(+). It functions in the pathway polyol metabolism; myo-inositol degradation into acetyl-CoA; acetyl-CoA from myo-inositol: step 7/7. Its function is as follows. Catalyzes the oxidation of malonate semialdehyde (MSA) and methylmalonate semialdehyde (MMSA) into acetyl-CoA and propanoyl-CoA, respectively. Is involved in a myo-inositol catabolic pathway. Bicarbonate, and not CO2, is the end-product of the enzymatic reaction. The sequence is that of Malonate-semialdehyde dehydrogenase 1 from Bacillus licheniformis (strain ATCC 14580 / DSM 13 / JCM 2505 / CCUG 7422 / NBRC 12200 / NCIMB 9375 / NCTC 10341 / NRRL NRS-1264 / Gibson 46).